Consider the following 558-residue polypeptide: GPI mannosyltransferase 3 (558 aa).

4 helical membrane-spanning segments follow: residues Gly-53–Leu-73, Val-81–Phe-101, Ala-164–Leu-184, and Val-190–Leu-210. Asn-220 carries N-linked (GlcNAc...) asparagine glycosylation. Residues Ile-234–Tyr-254 traverse the membrane as a helical segment. Asn-275 is a glycosylation site (N-linked (GlcNAc...) asparagine). The next 4 helical transmembrane spans lie at Val-292–Trp-312, Pro-323–His-343, Phe-348–Ser-368, and Ala-372–Met-392.

It belongs to the glycosyltransferase 22 family. PIGB subfamily.

The protein resides in the endoplasmic reticulum membrane. Its pathway is glycolipid biosynthesis; glycosylphosphatidylinositol-anchor biosynthesis. In terms of biological role, mannosyltransferase involved in glycosylphosphatidylinositol-anchor biosynthesis. Transfers the third alpha-1,2-mannose to Man2-GlcN-acyl-PI during GPI precursor assembly. This chain is GPI mannosyltransferase 3 (GPI10), found in Trypanosoma brucei brucei.